The primary structure comprises 791 residues: Endonuclease MutS2 (791 aa).

Gly339–Thr346 provides a ligand contact to ATP. The 76-residue stretch at Leu715–Lys790 folds into the Smr domain.

Belongs to the DNA mismatch repair MutS family. MutS2 subfamily. Homodimer. Binds to stalled ribosomes, contacting rRNA.

In terms of biological role, endonuclease that is involved in the suppression of homologous recombination and thus may have a key role in the control of bacterial genetic diversity. Its function is as follows. Acts as a ribosome collision sensor, splitting the ribosome into its 2 subunits. Detects stalled/collided 70S ribosomes which it binds and splits by an ATP-hydrolysis driven conformational change. Acts upstream of the ribosome quality control system (RQC), a ribosome-associated complex that mediates the extraction of incompletely synthesized nascent chains from stalled ribosomes and their subsequent degradation. Probably generates substrates for RQC. The sequence is that of Endonuclease MutS2 from Halothermothrix orenii (strain H 168 / OCM 544 / DSM 9562).